The following is a 163-amino-acid chain: Large ribosomal subunit protein uL18 (163 aa).

This sequence belongs to the universal ribosomal protein uL18 family. As to quaternary structure, part of the 50S ribosomal subunit. Contacts the 5S and 23S rRNAs.

In terms of biological role, this is one of the proteins that bind and probably mediate the attachment of the 5S RNA into the large ribosomal subunit, where it forms part of the central protuberance. The polypeptide is Large ribosomal subunit protein uL18 (Thermoplasma acidophilum (strain ATCC 25905 / DSM 1728 / JCM 9062 / NBRC 15155 / AMRC-C165)).